The primary structure comprises 612 residues: Dihydroxy-acid dehydratase (612 aa).

Residue aspartate 81 coordinates Mg(2+). Cysteine 122 provides a ligand contact to [2Fe-2S] cluster. 2 residues coordinate Mg(2+): aspartate 123 and lysine 124. Lysine 124 carries the N6-carboxylysine modification. [2Fe-2S] cluster is bound at residue cysteine 196. A Mg(2+)-binding site is contributed by glutamate 492. The Proton acceptor role is filled by serine 518.

The protein belongs to the IlvD/Edd family. Homodimer. [2Fe-2S] cluster is required as a cofactor. Mg(2+) serves as cofactor.

The enzyme catalyses (2R)-2,3-dihydroxy-3-methylbutanoate = 3-methyl-2-oxobutanoate + H2O. It carries out the reaction (2R,3R)-2,3-dihydroxy-3-methylpentanoate = (S)-3-methyl-2-oxopentanoate + H2O. It participates in amino-acid biosynthesis; L-isoleucine biosynthesis; L-isoleucine from 2-oxobutanoate: step 3/4. The protein operates within amino-acid biosynthesis; L-valine biosynthesis; L-valine from pyruvate: step 3/4. Functionally, functions in the biosynthesis of branched-chain amino acids. Catalyzes the dehydration of (2R,3R)-2,3-dihydroxy-3-methylpentanoate (2,3-dihydroxy-3-methylvalerate) into 2-oxo-3-methylpentanoate (2-oxo-3-methylvalerate) and of (2R)-2,3-dihydroxy-3-methylbutanoate (2,3-dihydroxyisovalerate) into 2-oxo-3-methylbutanoate (2-oxoisovalerate), the penultimate precursor to L-isoleucine and L-valine, respectively. The polypeptide is Dihydroxy-acid dehydratase (Cereibacter sphaeroides (strain ATCC 17029 / ATH 2.4.9) (Rhodobacter sphaeroides)).